Reading from the N-terminus, the 473-residue chain is Cysteine protease ATG4A (473 aa).

Residues 1 to 33 form a disordered region; sequence MTSLPGRGVSPSSSDPLCEGNAAPSSSSSGQDL. The Nucleophile role is filled by cysteine 160. Catalysis depends on residues aspartate 357 and histidine 359.

The protein belongs to the peptidase C54 family. In terms of assembly, interacts with ATG8.

The protein localises to the cytoplasm. It catalyses the reaction [protein]-C-terminal L-amino acid-glycyl-phosphatidylethanolamide + H2O = [protein]-C-terminal L-amino acid-glycine + a 1,2-diacyl-sn-glycero-3-phosphoethanolamine. Its function is as follows. Cysteine protease that plays a key role in autophagy by mediating both proteolytic activation and delipidation of ATG8 family proteins. The protease activity is required for proteolytic activation of ATG8 family proteins: cleaves the C-terminal amino acid of ATG8 proteins to reveal a C-terminal glycine. Exposure of the glycine at the C-terminus is essential for ATG8 proteins conjugation to phosphatidylethanolamine (PE) and insertion to membranes, which is necessary for autophagy. In addition to the protease activity, also mediates delipidation of PE-conjugated ATG8 proteins. The chain is Cysteine protease ATG4A (ATG4A) from Oryza sativa subsp. indica (Rice).